The sequence spans 714 residues: Developmentally-regulated protein kinase 1 (714 aa).

Disordered regions lie at residues 88–122 (NNNI…NNFN) and 174–266 (CNMI…IINN). Composition is skewed to low complexity over residues 174 to 200 (CNMI…NNNN), 209 to 227 (PSSN…TTSS), and 240 to 266 (NFNQ…IINN). One can recognise a Protein kinase domain in the interval 334–589 (FNFYGSLGSG…SCSIRNHKWF (256 aa)). Residues 340–348 (LGSGSFGTA) and Lys-363 contribute to the ATP site. Asp-457 (proton acceptor) is an active-site residue. Thr-488 is modified (phosphothreonine).

This sequence belongs to the protein kinase superfamily. AGC Ser/Thr protein kinase family.

It catalyses the reaction L-seryl-[protein] + ATP = O-phospho-L-seryl-[protein] + ADP + H(+). The enzyme catalyses L-threonyl-[protein] + ATP = O-phospho-L-threonyl-[protein] + ADP + H(+). This is Developmentally-regulated protein kinase 1 (pkaD) from Dictyostelium discoideum (Social amoeba).